We begin with the raw amino-acid sequence, 126 residues long: C-type natriuretic peptide (126 aa).

Positions 1–23 are cleaved as a signal peptide; it reads MHLSQLLACALLLTLLSLRPSEA. Residues 20 to 71 form a disordered region; sequence PSEAKPGAPPKVPRTPPAEELAEPQAAGGGQKKGDKAPGGGGANLKGDRSRL. A propeptide spanning residues 24-73 is cleaved from the precursor; the sequence is KPGAPPKVPRTPPAEELAEPQAAGGGQKKGDKAPGGGGANLKGDRSRLLR. Over residues 26 to 35 the composition is skewed to pro residues; the sequence is GAPPKVPRTP. Residues 46-63 show a composition bias toward gly residues; it reads AGGGQKKGDKAPGGGGAN. Residues Cys-110 and Cys-126 are joined by a disulfide bond.

Belongs to the natriuretic peptide family. Degraded by IDE (in vitro). In the kidney, predominantly expressed in the distal tubular cells (at protein level).

The protein localises to the secreted. Hormone which plays a role in endochondral ossification through regulation of cartilaginous growth plate chondrocytes proliferation and differentiation. May also be vasoactive and natriuretic. Acts by specifically binding and stimulating NPR2 to produce cGMP. Binds the clearance receptor NPR3. This chain is C-type natriuretic peptide (NPPC), found in Homo sapiens (Human).